The chain runs to 2178 residues: Streptococcal hemagglutinin (2178 aa).

Residues Met-1–Ala-90 form the signal peptide. Positions Glu-91 to Leu-137 are non-repeat region 1 (NR1). The interval Ser-138–Ser-219 is ser-rich region 1 (SR1). Low complexity predominate over residues Thr-192–Asn-244. 11 disordered regions span residues Thr-192 to Thr-246, Val-495 to Ala-557, Ser-584 to Ala-653, Ser-836 to Ala-857, Ser-884 to Ala-917, Ser-944 to Ala-993, Ser-1020 to Ala-1289, Ala-1341 to Ser-1390, Ser-1488 to Ala-1685, Ala-1725 to Thr-1901, and Leu-2119 to Glu-2151. Residues Leu-220–Ile-449 are non-repeat region 2 (NR2). Residues Ser-450 to Gln-2143 form a ser-rich region 2 (SR2) region. The segment covering Leu-2119–Ser-2130 has biased composition (low complexity). Positions Leu-2144–Gly-2148 match the LPXTG sorting signal motif. Thr-2147 carries the post-translational modification Pentaglycyl murein peptidoglycan amidated threonine. A propeptide spans Gly-2148–Asp-2178 (removed by sortase).

This sequence belongs to the serine-rich repeat protein (SRRP) family. Post-translationally, the protein is glycosylated in vivo; constructs without SR1 and SR2 are not glycosylated.

It localises to the secreted. It is found in the cell wall. A cell wall protein involved with PadA in host cell interactions required for colonization and pathogensis. Mediates hemagglutination and adherence to ghst glycoproteins. Recognizes fetuin-A (AHSG), a highly glycosylated human plasma protein, also involved in recognition of human platelets, probably via platelet glycoprotein Ib alpha (GP1BA). Acts in concert with PadA to promote binding to glycosylated human fibronectin (FN1) and vitronectin (VTN), and biofilm formation. Plays a major role in fibronectin and vitronectin binding; binding is mediated by glycosylated regions. Probably mediates interaction of PadA with resting platelets. The protein is Streptococcal hemagglutinin of Streptococcus gordonii (strain Challis / ATCC 35105 / BCRC 15272 / CH1 / DL1 / V288).